The sequence spans 186 residues: Potassium-transporting ATPase KdpC subunit (186 aa).

A helical membrane pass occupies residues 9-29 (AAVVLFGGCLLVLGLLYPLAM).

It belongs to the KdpC family. In terms of assembly, the system is composed of three essential subunits: KdpA, KdpB and KdpC.

It is found in the cell membrane. Its function is as follows. Part of the high-affinity ATP-driven potassium transport (or Kdp) system, which catalyzes the hydrolysis of ATP coupled with the electrogenic transport of potassium into the cytoplasm. This subunit acts as a catalytic chaperone that increases the ATP-binding affinity of the ATP-hydrolyzing subunit KdpB by the formation of a transient KdpB/KdpC/ATP ternary complex. The polypeptide is Potassium-transporting ATPase KdpC subunit (Methanosphaerula palustris (strain ATCC BAA-1556 / DSM 19958 / E1-9c)).